Reading from the N-terminus, the 240-residue chain is Putative cytochrome c-type biogenesis protein DbsD-like (240 aa).

6 helical membrane passes run 32 to 52 (FVFF…ILPI), 74 to 94 (FFFC…ATLL), 104 to 124 (GIPV…LNIV), 149 to 169 (VGIG…LLIW), 176 to 196 (LFIG…PIII), and 218 to 238 (APFS…SSIL).

The protein belongs to the DsbD family.

It is found in the plastid. The protein localises to the chloroplast membrane. Its function is as follows. Could be involved in cytochrome c synthesis. This is Putative cytochrome c-type biogenesis protein DbsD-like from Porphyra purpurea (Red seaweed).